A 567-amino-acid chain; its full sequence is Inactive protein kinase SELMODRAFT_444075 (567 aa).

A disordered region spans residues 148-206; the sequence is NETRRKGPSPSEVLNSTTSSPASHKPQVLNDFLRMKESREYTEETDTQRNVSRPVDRVS. Residues 159–169 show a composition bias toward polar residues; it reads EVLNSTTSSPA. The span at 180–189 shows a compositional bias: basic and acidic residues; it reads LRMKESREYT. A compositionally biased stretch (low complexity) spans 196-206; it reads RNVSRPVDRVS. The region spanning 255–487 is the Protein kinase domain; sequence FSDVNFLAEG…EGDSLSDTSL (233 aa). ATP is bound by residues 261-269 and K283; that span reads LAEGGYGSV. Residues 511-538 are compositionally biased toward low complexity; sequence DSSSSRSSSASSVLKSFSRTQHSSRSSS. The interval 511–567 is disordered; it reads DSSSSRSSSASSVLKSFSRTQHSSRSSSNAGSPLNPAATQALAFKKYNKNTTRHTQD. Basic residues predominate over residues 556-567; sequence KYNKNTTRHTQD.

In Selaginella moellendorffii (Spikemoss), this protein is Inactive protein kinase SELMODRAFT_444075.